Consider the following 158-residue polypeptide: 6,7-dimethyl-8-ribityllumazine synthase (158 aa).

5-amino-6-(D-ribitylamino)uracil contacts are provided by residues Phe-24, Ala-58 to Glu-60, and Ala-82 to Ile-84. Gly-87–Thr-88 is a binding site for (2S)-2-hydroxy-3-oxobutyl phosphate. His-90 serves as the catalytic Proton donor. Phe-115 serves as a coordination point for 5-amino-6-(D-ribitylamino)uracil. Arg-129 is a (2S)-2-hydroxy-3-oxobutyl phosphate binding site.

It belongs to the DMRL synthase family. In terms of assembly, forms an icosahedral capsid composed of 60 subunits, arranged as a dodecamer of pentamers.

It catalyses the reaction (2S)-2-hydroxy-3-oxobutyl phosphate + 5-amino-6-(D-ribitylamino)uracil = 6,7-dimethyl-8-(1-D-ribityl)lumazine + phosphate + 2 H2O + H(+). The protein operates within cofactor biosynthesis; riboflavin biosynthesis; riboflavin from 2-hydroxy-3-oxobutyl phosphate and 5-amino-6-(D-ribitylamino)uracil: step 1/2. In terms of biological role, catalyzes the formation of 6,7-dimethyl-8-ribityllumazine by condensation of 5-amino-6-(D-ribitylamino)uracil with 3,4-dihydroxy-2-butanone 4-phosphate. This is the penultimate step in the biosynthesis of riboflavin. The polypeptide is 6,7-dimethyl-8-ribityllumazine synthase (Stutzerimonas stutzeri (strain A1501) (Pseudomonas stutzeri)).